Here is a 59-residue protein sequence, read N- to C-terminus: Photosystem II reaction center protein K (59 aa).

A propeptide spanning residues 1-22 (MLNIFSLICLNSALYPSSLFFA) is cleaved from the precursor. Residues 38–58 (MPVIPLFFFLLAFVWQAAVSF) traverse the membrane as a helical segment.

The protein belongs to the PsbK family. As to quaternary structure, PSII is composed of 1 copy each of membrane proteins PsbA, PsbB, PsbC, PsbD, PsbE, PsbF, PsbH, PsbI, PsbJ, PsbK, PsbL, PsbM, PsbT, PsbX, PsbY, PsbZ, Psb30/Ycf12, at least 3 peripheral proteins of the oxygen-evolving complex and a large number of cofactors. It forms dimeric complexes.

The protein localises to the plastid. It localises to the chloroplast thylakoid membrane. Its function is as follows. One of the components of the core complex of photosystem II (PSII). PSII is a light-driven water:plastoquinone oxidoreductase that uses light energy to abstract electrons from H(2)O, generating O(2) and a proton gradient subsequently used for ATP formation. It consists of a core antenna complex that captures photons, and an electron transfer chain that converts photonic excitation into a charge separation. The sequence is that of Photosystem II reaction center protein K from Lactuca sativa (Garden lettuce).